The following is a 645-amino-acid chain: Macrolide export ATP-binding/permease protein MacB (645 aa).

Positions 6–244 constitute an ABC transporter domain; that stretch reads IELKDVTRYY…EAPQYRYARK (239 aa). 42-49 provides a ligand contact to ATP; the sequence is GQSGSGKS. Transmembrane regions (helical) follow at residues 271-291, 520-540, 577-597, and 608-628; these read ALTL…LAIG, FSIL…IGVM, VVGG…VFII, and PLPA…FGLL.

The protein belongs to the ABC transporter superfamily. Macrolide exporter (TC 3.A.1.122) family. As to quaternary structure, homodimer.

Its subcellular location is the cell inner membrane. In terms of biological role, non-canonical ABC transporter that contains transmembrane domains (TMD), which form a pore in the inner membrane, and an ATP-binding domain (NBD), which is responsible for energy generation. Confers resistance against macrolides. The polypeptide is Macrolide export ATP-binding/permease protein MacB (Hyphomonas neptunium (strain ATCC 15444)).